Here is a 245-residue protein sequence, read N- to C-terminus: 1-(5-phosphoribosyl)-5-[(5-phosphoribosylamino)methylideneamino] imidazole-4-carboxamide isomerase (245 aa).

The Proton acceptor role is filled by Asp-7. The Proton donor role is filled by Asp-129.

Belongs to the HisA/HisF family.

Its subcellular location is the cytoplasm. It catalyses the reaction 1-(5-phospho-beta-D-ribosyl)-5-[(5-phospho-beta-D-ribosylamino)methylideneamino]imidazole-4-carboxamide = 5-[(5-phospho-1-deoxy-D-ribulos-1-ylimino)methylamino]-1-(5-phospho-beta-D-ribosyl)imidazole-4-carboxamide. It functions in the pathway amino-acid biosynthesis; L-histidine biosynthesis; L-histidine from 5-phospho-alpha-D-ribose 1-diphosphate: step 4/9. This chain is 1-(5-phosphoribosyl)-5-[(5-phosphoribosylamino)methylideneamino] imidazole-4-carboxamide isomerase, found in Erwinia tasmaniensis (strain DSM 17950 / CFBP 7177 / CIP 109463 / NCPPB 4357 / Et1/99).